The following is a 317-amino-acid chain: Pinoresinol reductase 2 (317 aa).

Positions 18, 20, 21, 41, 50, 90, 91, 95, 98, and 121 each coordinate NADP(+). (-)-pinoresinol is bound at residue M125. Residues K144 and F166 each coordinate NADP(+). K144 (proton acceptor) is an active-site residue. G178 lines the (-)-pinoresinol pocket.

Belongs to the NmrA-type oxidoreductase family. Isoflavone reductase subfamily. Forms homodimers. Expressed in roots. Detected in stems.

It catalyses the reaction (-)-lariciresinol + NADP(+) = (-)-pinoresinol + NADPH + H(+). Its function is as follows. Reductase involved in lignan biosynthesis. Unlike conventional pinoresinol reductases that can reduce both pinoresinol and lariciresinol, PRR2 shows a strict substrate selectivity for (-)-pinoresinol. No activity with (+)-pinoresinol or lariciresinol. Abstracts the 4R-hydride from the NADPH cofactor during catalysis. The chain is Pinoresinol reductase 2 from Arabidopsis thaliana (Mouse-ear cress).